A 224-amino-acid chain; its full sequence is UPF0758 protein RSc2444 (224 aa).

The 123-residue stretch at 102–224 (TLESPQSVKD…VYSFLEHGKM (123 aa)) folds into the MPN domain. The Zn(2+) site is built by H173, H175, and D186. The short motif at 173 to 186 (HNHPTGHVEPSESD) is the JAMM motif element.

This sequence belongs to the UPF0758 family.

This Ralstonia nicotianae (strain ATCC BAA-1114 / GMI1000) (Ralstonia solanacearum) protein is UPF0758 protein RSc2444.